The sequence spans 242 residues: uncharacterized protein (242 aa).

The S4 RNA-binding domain occupies 2-69 (YRLAKIISNA…KPRLWIYYKP (68 aa)). Catalysis depends on Asp-102, which acts as the Nucleophile.

The protein belongs to the pseudouridine synthase RsuA family.

The catalysed reaction is a uridine in RNA = a pseudouridine in RNA. This is an uncharacterized protein from Rickettsia typhi (strain ATCC VR-144 / Wilmington).